Reading from the N-terminus, the 493-residue chain is EGF-containing fibulin-like extracellular matrix protein 1 (493 aa).

The N-terminal stretch at 1–17 (MLKALFLTMLTLALVKS) is a signal peptide. Residues 26-71 (YTQCTDGYEWDPVRQQCKDIDECDIVPDACKGGMKCVNHYGGYLCL) enclose the EGF-like 1; atypical domain. Positions 173–213 (DIDECTAGTHNCRADQVCINLRGSFACQCPPGYQKRGEQCV) constitute an EGF-like 2; calcium-binding domain. Cystine bridges form between Cys177–Cys190, Cys184–Cys199, Cys201–Cys212, Cys218–Cys228, Cys224–Cys237, Cys239–Cys252, Cys258–Cys268, Cys264–Cys277, Cys279–Cys292, Cys298–Cys309, Cys305–Cys318, Cys320–Cys332, Cys338–Cys350, Cys344–Cys359, and Cys365–Cys377. The EGF-like 3; calcium-binding domain occupies 214-253 (DIDECTIPPYCHQRCVNTPGSFYCQCSPGFQLAANNYTCV). Residue Asn249 is glycosylated (N-linked (GlcNAc...) asparagine). Positions 254 to 293 (DINECDASNQCAQQCYNILGSFICQCNQGYELSSDRLNCE) constitute an EGF-like 4; calcium-binding domain. The tract at residues 259 to 493 (DASNQCAQQC…LTIIVGPFSF (235 aa)) is mediates interaction with TIMP3. One can recognise an EGF-like 5; calcium-binding domain in the interval 294-333 (DIDECRTSSYLCQYQCVNEPGKFSCMCPQGYQVVRSRTCQ). Positions 334–378 (DINECETTNECREDEMCWNYHGGFRCYPRNPCQDPYILTPENRCV) constitute an EGF-like 6; calcium-binding domain.

This sequence belongs to the fibulin family. Interacts with ECM1. Interacts with TIMP3.

It localises to the secreted. The protein resides in the extracellular space. Its subcellular location is the extracellular matrix. Its function is as follows. Binds EGFR, the EGF receptor, inducing EGFR autophosphorylation and the activation of downstream signaling pathways. May play a role in cell adhesion and migration. May function as a negative regulator of chondrocyte differentiation. In the olfactory epithelium, it may regulate glial cell migration, differentiation and the ability of glial cells to support neuronal neurite outgrowth. This chain is EGF-containing fibulin-like extracellular matrix protein 1 (EFEMP1), found in Macaca fascicularis (Crab-eating macaque).